A 490-amino-acid polypeptide reads, in one-letter code: Cytochrome P450 71A19 (490 aa).

The helical transmembrane segment at 3 to 23 (IILVTLCLTTLLALLLLKSIL) threads the bilayer. Cys433 contributes to the heme binding site.

Belongs to the cytochrome P450 family. Heme is required as a cofactor.

It is found in the membrane. This Arabidopsis thaliana (Mouse-ear cress) protein is Cytochrome P450 71A19 (CYP71A19).